We begin with the raw amino-acid sequence, 769 residues long: 5-methyltetrahydropteroyltriglutamate--homocysteine methyltransferase (769 aa).

Residues 16–19 (RELK) and K118 contribute to the 5-methyltetrahydropteroyltri-L-glutamate site. L-homocysteine contacts are provided by residues 440–442 (IGS) and E493. L-methionine-binding positions include 440-442 (IGS) and E493. Residues 524–525 (RC) and W570 contribute to the 5-methyltetrahydropteroyltri-L-glutamate site. D608 contacts L-homocysteine. D608 serves as a coordination point for L-methionine. 5-methyltetrahydropteroyltri-L-glutamate is bound at residue E614. Zn(2+) contacts are provided by H650, C652, and E674. H706 serves as the catalytic Proton donor. C738 contributes to the Zn(2+) binding site.

The protein belongs to the vitamin-B12 independent methionine synthase family. Zn(2+) is required as a cofactor.

The catalysed reaction is 5-methyltetrahydropteroyltri-L-glutamate + L-homocysteine = tetrahydropteroyltri-L-glutamate + L-methionine. The protein operates within amino-acid biosynthesis; L-methionine biosynthesis via de novo pathway; L-methionine from L-homocysteine (MetE route): step 1/1. Its function is as follows. Catalyzes the transfer of a methyl group from 5-methyltetrahydrofolate to homocysteine resulting in methionine formation. In Acidiphilium cryptum (strain JF-5), this protein is 5-methyltetrahydropteroyltriglutamate--homocysteine methyltransferase.